Consider the following 336-residue polypeptide: uncharacterized protein (336 aa).

A signal peptide spans 1 to 23; the sequence is MKTRHLVYLAFALLGLGLAGLLE. Transmembrane regions (helical) follow at residues 34 to 54, 75 to 95, and 106 to 126; these read LLSL…LLLG, VVVA…LLTT, and VHSL…ALGY. The 112-residue stretch at 144–255 folds into the PINc domain; it reads VLDTSVLVDG…MARIYGVKAL (112 aa). Residue aspartate 222 participates in Mg(2+) binding. The TRAM domain occupies 267 to 328; sequence QLQVGDTLKL…IQTQVGRLFF (62 aa).

It belongs to the PINc/VapC protein family. Mg(2+) is required as a cofactor.

The protein localises to the membrane. In terms of biological role, part of a toxin-antitoxin (TA) system. An RNase. This is an uncharacterized protein from Thermus thermophilus (strain ATCC 27634 / DSM 579 / HB8).